Reading from the N-terminus, the 284-residue chain is Nodulation protein O (284 aa).

Residues 1–27 (MNIKGSDNGSFIKGSPENDIIDGGKKN) are disordered. Hemolysin-type calcium-binding repeat units follow at residues 13–30 (KGSPENDIIDGGKKNDWI), 31–48 (DAGNGDDRIKAGDGQDSI), 58–75 (WAGKGSDVIHADGGDDLL), 94–111 (HSGEGDDVLYAGPGSDIL), and 112–129 (VAGDGADVLTGGDDGDAF). Ca(2+) is bound by residues aspartate 100, aspartate 109, aspartate 118, and aspartate 127. Residues 208-222 (DRGFASAAAAATAID) form an export signal (aspartic acid box) region.

Its subcellular location is the secreted. In terms of biological role, the NodO protein may play a role in nodule development by direct interaction with the root hair cells or some other plant surface in a calcium-dependent manner. In Rhizobium leguminosarum bv. viciae, this protein is Nodulation protein O (nodO).